A 286-amino-acid polypeptide reads, in one-letter code: Bifunctional protein FolD (286 aa).

NADP(+)-binding positions include 165 to 167 (GRS) and Ser-190.

This sequence belongs to the tetrahydrofolate dehydrogenase/cyclohydrolase family. As to quaternary structure, homodimer.

It catalyses the reaction (6R)-5,10-methylene-5,6,7,8-tetrahydrofolate + NADP(+) = (6R)-5,10-methenyltetrahydrofolate + NADPH. The catalysed reaction is (6R)-5,10-methenyltetrahydrofolate + H2O = (6R)-10-formyltetrahydrofolate + H(+). Its pathway is one-carbon metabolism; tetrahydrofolate interconversion. In terms of biological role, catalyzes the oxidation of 5,10-methylenetetrahydrofolate to 5,10-methenyltetrahydrofolate and then the hydrolysis of 5,10-methenyltetrahydrofolate to 10-formyltetrahydrofolate. The chain is Bifunctional protein FolD from Staphylococcus aureus (strain bovine RF122 / ET3-1).